The primary structure comprises 184 residues: Protein GrpE (184 aa).

The segment covering 1-26 has biased composition (polar residues); it reads MANEQNEQAQDIQNEQVEQSNEQTQA. The interval 1–34 is disordered; the sequence is MANEQNEQAQDIQNEQVEQSNEQTQAEGVEQAND.

The protein belongs to the GrpE family. In terms of assembly, homodimer.

Its subcellular location is the cytoplasm. Functionally, participates actively in the response to hyperosmotic and heat shock by preventing the aggregation of stress-denatured proteins, in association with DnaK and GrpE. It is the nucleotide exchange factor for DnaK and may function as a thermosensor. Unfolded proteins bind initially to DnaJ; upon interaction with the DnaJ-bound protein, DnaK hydrolyzes its bound ATP, resulting in the formation of a stable complex. GrpE releases ADP from DnaK; ATP binding to DnaK triggers the release of the substrate protein, thus completing the reaction cycle. Several rounds of ATP-dependent interactions between DnaJ, DnaK and GrpE are required for fully efficient folding. This chain is Protein GrpE, found in Acinetobacter baumannii (strain AB307-0294).